The primary structure comprises 258 residues: Imidazole glycerol phosphate synthase subunit HisF (258 aa).

Active-site residues include aspartate 11 and aspartate 130.

The protein belongs to the HisA/HisF family. As to quaternary structure, heterodimer of HisH and HisF.

The protein resides in the cytoplasm. The enzyme catalyses 5-[(5-phospho-1-deoxy-D-ribulos-1-ylimino)methylamino]-1-(5-phospho-beta-D-ribosyl)imidazole-4-carboxamide + L-glutamine = D-erythro-1-(imidazol-4-yl)glycerol 3-phosphate + 5-amino-1-(5-phospho-beta-D-ribosyl)imidazole-4-carboxamide + L-glutamate + H(+). Its pathway is amino-acid biosynthesis; L-histidine biosynthesis; L-histidine from 5-phospho-alpha-D-ribose 1-diphosphate: step 5/9. Functionally, IGPS catalyzes the conversion of PRFAR and glutamine to IGP, AICAR and glutamate. The HisF subunit catalyzes the cyclization activity that produces IGP and AICAR from PRFAR using the ammonia provided by the HisH subunit. This is Imidazole glycerol phosphate synthase subunit HisF from Magnetococcus marinus (strain ATCC BAA-1437 / JCM 17883 / MC-1).